The sequence spans 244 residues: Uridylate kinase (244 aa).

19–22 (KVSG) lines the ATP pocket. Residues 27 to 32 (GERGFG) are involved in allosteric activation by GTP. UMP is bound at residue Gly61. ATP is bound by residues Gly62 and Arg66. Residues Asp80 and 141-148 (IGSPFFTT) each bind UMP. 4 residues coordinate ATP: Thr168, Gln169, Tyr174, and Asp177.

The protein belongs to the UMP kinase family. Homohexamer.

It localises to the cytoplasm. It carries out the reaction UMP + ATP = UDP + ADP. It participates in pyrimidine metabolism; CTP biosynthesis via de novo pathway; UDP from UMP (UMPK route): step 1/1. Its activity is regulated as follows. Allosterically activated by GTP. Inhibited by UTP. Functionally, catalyzes the reversible phosphorylation of UMP to UDP. This is Uridylate kinase from Anaplasma phagocytophilum (strain HZ).